The primary structure comprises 250 residues: Peptidyl-tRNA hydrolase (250 aa).

Residue Tyr-14 participates in tRNA binding. Catalysis depends on His-19, which acts as the Proton acceptor. 3 residues coordinate tRNA: Phe-64, Asn-66, and Asn-112. The segment at 192–250 (MGDGNQRPGGVKTDPAQLEKAPPKAQSHIRQARQNQKKPNIPESGPMAEMLKKLLGKKD) is disordered. The span at 219 to 229 (HIRQARQNQKK) shows a compositional bias: polar residues. A compositionally biased stretch (basic and acidic residues) spans 241–250 (MLKKLLGKKD).

Belongs to the PTH family. As to quaternary structure, monomer.

The protein localises to the cytoplasm. The catalysed reaction is an N-acyl-L-alpha-aminoacyl-tRNA + H2O = an N-acyl-L-amino acid + a tRNA + H(+). Its function is as follows. Hydrolyzes ribosome-free peptidyl-tRNAs (with 1 or more amino acids incorporated), which drop off the ribosome during protein synthesis, or as a result of ribosome stalling. Catalyzes the release of premature peptidyl moieties from peptidyl-tRNA molecules trapped in stalled 50S ribosomal subunits, and thus maintains levels of free tRNAs and 50S ribosomes. The protein is Peptidyl-tRNA hydrolase of Brucella abortus (strain 2308).